Consider the following 248-residue polypeptide: 2,3-bisphosphoglycerate-dependent phosphoglycerate mutase (248 aa).

Substrate-binding positions include 10–17 (RHGQSEWN), 23–24 (TG), Arg-62, 89–92 (ERHY), Lys-100, 116–117 (RR), and 183–184 (GN). The active-site Tele-phosphohistidine intermediate is the His-11. Catalysis depends on Glu-89, which acts as the Proton donor/acceptor.

Belongs to the phosphoglycerate mutase family. BPG-dependent PGAM subfamily.

The enzyme catalyses (2R)-2-phosphoglycerate = (2R)-3-phosphoglycerate. It functions in the pathway carbohydrate degradation; glycolysis; pyruvate from D-glyceraldehyde 3-phosphate: step 3/5. Functionally, catalyzes the interconversion of 2-phosphoglycerate and 3-phosphoglycerate. In Corynebacterium diphtheriae (strain ATCC 700971 / NCTC 13129 / Biotype gravis), this protein is 2,3-bisphosphoglycerate-dependent phosphoglycerate mutase.